Here is a 281-residue protein sequence, read N- to C-terminus: MTHAIEVCGLTKSFRADRKALDDVTLHVAPGEMVALLGASGSGKSTLLRHIAGFVTSDAGAGEIVVNGRAVQRHGRLARNVRSVRSEIGFVFQQFNLVGRLPVMTNVLVGMLSRLPKWRSLLRLFKANEIQAGLHALAQVGIDDYAFQRASTLSGGQQQRAAIARTLVQNARVILADEPIASLDPESSRRVMSLLAQINRTRQVAVVVSLHQVDVAMRYCPRVVALRHGKVVYDGPSAALTPDMLRDLYGTEAEELLHDTLDSEPDAVPVPALAGMNIAAA.

In terms of domain architecture, ABC transporter spans 5–253; the sequence is IEVCGLTKSF…MLRDLYGTEA (249 aa). ATP is bound at residue 38-45; sequence GASGSGKS.

This sequence belongs to the ABC transporter superfamily. Phosphonates importer (TC 3.A.1.9.1) family. As to quaternary structure, the complex is composed of two ATP-binding proteins (PhnC), two transmembrane proteins (PhnE) and a solute-binding protein (PhnD).

The protein localises to the cell inner membrane. The enzyme catalyses phosphonate(out) + ATP + H2O = phosphonate(in) + ADP + phosphate + H(+). In terms of biological role, part of the ABC transporter complex PhnCDE involved in phosphonates import. Responsible for energy coupling to the transport system. The protein is Phosphonates import ATP-binding protein PhnC of Cupriavidus pinatubonensis (strain JMP 134 / LMG 1197) (Cupriavidus necator (strain JMP 134)).